The sequence spans 189 residues: Hypoxanthine/guanine phosphoribosyltransferase (189 aa).

It belongs to the purine/pyrimidine phosphoribosyltransferase family. Archaeal HPRT subfamily. Homodimer.

The protein localises to the cytoplasm. It carries out the reaction IMP + diphosphate = hypoxanthine + 5-phospho-alpha-D-ribose 1-diphosphate. It catalyses the reaction GMP + diphosphate = guanine + 5-phospho-alpha-D-ribose 1-diphosphate. Its pathway is purine metabolism; IMP biosynthesis via salvage pathway; IMP from hypoxanthine: step 1/1. Functionally, catalyzes a salvage reaction resulting in the formation of IMP that is energically less costly than de novo synthesis. The polypeptide is Hypoxanthine/guanine phosphoribosyltransferase (Methanothermus fervidus (strain ATCC 43054 / DSM 2088 / JCM 10308 / V24 S)).